The chain runs to 250 residues: Probable transcriptional regulatory protein Cag_0165 (250 aa).

The protein belongs to the TACO1 family.

Its subcellular location is the cytoplasm. The polypeptide is Probable transcriptional regulatory protein Cag_0165 (Chlorobium chlorochromatii (strain CaD3)).